Consider the following 583-residue polypeptide: 5-aminolevulinate synthase, erythroid-specific, mitochondrial (583 aa).

Residue Arg158 participates in succinyl-CoA binding. The pyridoxal 5'-phosphate site is built by Cys253 and Phe254. The succinyl-CoA site is built by Ser275 and Arg294. Pyridoxal 5'-phosphate-binding residues include Ser327, His355, and Thr383. Residue Lys386 is part of the active site. The residue at position 386 (Lys386) is an N6-(pyridoxal phosphate)lysine. Thr415 and Thr416 together coordinate pyridoxal 5'-phosphate. Thr503 is a binding site for succinyl-CoA.

Belongs to the class-II pyridoxal-phosphate-dependent aminotransferase family. As to quaternary structure, homodimer. Pyridoxal 5'-phosphate is required as a cofactor.

The protein resides in the mitochondrion inner membrane. It catalyses the reaction succinyl-CoA + glycine + H(+) = 5-aminolevulinate + CO2 + CoA. Its pathway is porphyrin-containing compound metabolism; protoporphyrin-IX biosynthesis; 5-aminolevulinate from glycine: step 1/1. Its function is as follows. Catalyzes the pyridoxal 5'-phosphate (PLP)-dependent condensation of succinyl-CoA and glycine to form aminolevulinic acid (ALA), with CoA and CO2 as by-products. Contributes significantly to heme formation during erythropoiesis. The chain is 5-aminolevulinate synthase, erythroid-specific, mitochondrial (alas2) from Danio rerio (Zebrafish).